The chain runs to 70 residues: UPF0352 protein Sden_2336 (70 aa).

It belongs to the UPF0352 family.

The polypeptide is UPF0352 protein Sden_2336 (Shewanella denitrificans (strain OS217 / ATCC BAA-1090 / DSM 15013)).